Here is a 203-residue protein sequence, read N- to C-terminus: Cutinase pbc1 (203 aa).

Residues 1 to 18 (MKVTALGNTLTGFGQALA) form the signal peptide. Cysteines 32 and 107 form a disulfide. S118 (nucleophile) is an active-site residue. An intrachain disulfide couples C166 to C173. The active site involves H170. The active-site Proton donor/acceptor is H183.

Belongs to the cutinase family. The 2 disulfide bonds play a critical role in holding the catalytic residues in juxta-position; reduction of the disulfide bridges results in the complete inactivation of the enzyme.

The protein localises to the secreted. The catalysed reaction is cutin + H2O = cutin monomers.. Catalyzes the hydrolysis of complex carboxylic polyesters found in the cell wall of plants. Degrades cutin, a macromolecule that forms the structure of the plant cuticle. Allows pathogenic fungi to penetrate through the cuticular barrier into the host plant during the initial stage of fungal infection. The protein is Cutinase pbc1 of Pyrenopeziza brassicae.